We begin with the raw amino-acid sequence, 445 residues long: 23S rRNA (uracil(1939)-C(5))-methyltransferase RlmD (445 aa).

One can recognise a TRAM domain in the interval 6–64 (RRLPREPFEIAITGLSHEGRGIAHHDERTLFVHGALPGERVRAVYTKRRRSVAEARVVE). The [4Fe-4S] cluster site is built by Cys77, Cys83, Cys86, and Cys165. S-adenosyl-L-methionine contacts are provided by Gln274, Phe303, Asn308, Glu324, Asp351, and Asp372. Cys398 (nucleophile) is an active-site residue.

This sequence belongs to the class I-like SAM-binding methyltransferase superfamily. RNA M5U methyltransferase family. RlmD subfamily.

It catalyses the reaction uridine(1939) in 23S rRNA + S-adenosyl-L-methionine = 5-methyluridine(1939) in 23S rRNA + S-adenosyl-L-homocysteine + H(+). In terms of biological role, catalyzes the formation of 5-methyl-uridine at position 1939 (m5U1939) in 23S rRNA. This chain is 23S rRNA (uracil(1939)-C(5))-methyltransferase RlmD, found in Alkalilimnicola ehrlichii (strain ATCC BAA-1101 / DSM 17681 / MLHE-1).